A 97-amino-acid polypeptide reads, in one-letter code: UPF0729 protein AAEL015238 (97 aa).

The tract at residues 69-97 (EVAASGSGSNGTATAVGSEGEAEETKKSQ) is disordered. Polar residues predominate over residues 74–83 (GSGSNGTATA).

It belongs to the UPF0729 family.

This chain is UPF0729 protein AAEL015238, found in Aedes aegypti (Yellowfever mosquito).